A 241-amino-acid polypeptide reads, in one-letter code: Small ribosomal subunit protein uS2 (241 aa).

It belongs to the universal ribosomal protein uS2 family.

This chain is Small ribosomal subunit protein uS2, found in Buchnera aphidicola subsp. Cinara cedri (strain Cc).